A 195-amino-acid polypeptide reads, in one-letter code: Anthranilate synthase component 2 (195 aa).

Positions 1 to 195 constitute a Glutamine amidotransferase type-1 domain; the sequence is MILIIDNYDS…LKNFLSLSYG (195 aa). L-glutamine is bound at residue 52–54; sequence GPG. Cys79 serves as the catalytic Nucleophile; for GATase activity. L-glutamine contacts are provided by residues Gln83 and 129–130; that span reads SL. Active-site residues include His173 and Glu175.

As to quaternary structure, tetramer of two components I and two components II.

The protein resides in the plastid. It is found in the chloroplast. The catalysed reaction is chorismate + L-glutamine = anthranilate + pyruvate + L-glutamate + H(+). It functions in the pathway amino-acid biosynthesis; L-tryptophan biosynthesis; L-tryptophan from chorismate: step 1/5. The chain is Anthranilate synthase component 2 (trpG) from Cyanidium caldarium (Red alga).